We begin with the raw amino-acid sequence, 250 residues long: Small ribosomal subunit protein uS2 (250 aa).

The interval 226–250 is disordered; the sequence is DQQNRQELGEDLGAAVEPAAEEALA. Positions 239-250 are enriched in low complexity; the sequence is AAVEPAAEEALA.

Belongs to the universal ribosomal protein uS2 family.

In Zymomonas mobilis subsp. mobilis (strain ATCC 31821 / ZM4 / CP4), this protein is Small ribosomal subunit protein uS2 (rpsB).